We begin with the raw amino-acid sequence, 381 residues long: Fatty acid elongase 6 (381 aa).

7 helical membrane passes run 10-30 (IAAAIEVPDWVLTKSAALVYS), 69-89 (LPYLNPWHVIASILAYLSLIV), 107-127 (GLVHNLGLHLLSLYMSLGLMI), 153-173 (LIWLFYVSKVVEWVDTVIMLL), 182-202 (FLHVYHHTTVFVLWWLALLVA), 216-236 (GVHVFMYGYYFLTLLFPSGIV), and 280-300 (LLQILFWYMISLLALFGNFLV). The short motif at 184-188 (HVYHH) is the HxxHH motif element. Residue H187 is the Nucleophile of the active site. The tract at residues 362–381 (RKNGNGNGQKASLQAMAGSR) is disordered.

This sequence belongs to the ELO family.

The protein resides in the membrane. Its pathway is lipid metabolism; polyunsaturated fatty acid biosynthesis. Its function is as follows. Involved in the synthesis of fatty acids. Elongates C18 polyunsaturated fatty acids (PUFAs) with a preference for Delta6 PUFAs. This is Fatty acid elongase 6 from Leishmania major.